The sequence spans 199 residues: Isopentenyl-diphosphate Delta-isomerase (199 aa).

H40 and H47 together coordinate Mn(2+). The region spanning 45–186 (PRHLAFSCHV…PALLSPWAVE (142 aa)) is the Nudix hydrolase domain. The active site involves C82. A Mg(2+)-binding site is contributed by C82. A Mn(2+)-binding site is contributed by H84. E102 is a Mg(2+) binding site. The Mn(2+) site is built by E131 and E133. E133 is an active-site residue.

It belongs to the IPP isomerase type 1 family. The cofactor is Mg(2+). It depends on Mn(2+) as a cofactor.

The protein localises to the cytoplasm. It carries out the reaction isopentenyl diphosphate = dimethylallyl diphosphate. It functions in the pathway isoprenoid biosynthesis; dimethylallyl diphosphate biosynthesis; dimethylallyl diphosphate from isopentenyl diphosphate: step 1/1. Functionally, catalyzes the 1,3-allylic rearrangement of the homoallylic substrate isopentenyl (IPP) to its highly electrophilic allylic isomer, dimethylallyl diphosphate (DMAPP). In Cutibacterium acnes (strain DSM 16379 / KPA171202) (Propionibacterium acnes), this protein is Isopentenyl-diphosphate Delta-isomerase.